We begin with the raw amino-acid sequence, 909 residues long: E3 ubiquitin-protein ligase HACE1 (909 aa).

The N-terminal helix important for homodimerization stretch occupies residues 1 to 21; the sequence is MERAMEQLNRLTRSLRRARTV. 7 ANK repeats span residues 23–55, 64–93, 97–126, 130–159, 163–192, 196–226, and 228–253; these read LPDD…NSKF, VKRS…NPNY, SGCT…DVNI, EGLT…DVDV, MGQT…DINR, SGAT…YLSD, and NGVT…QYHP. A disordered region spans residues 396-433; it reads KGQDQDGTSIPPFEPPGPGSYENLSTGTGESKPDVLGG. The HECT domain maps to 574 to 909; that stretch reads NCAKLKQGIA…HCGSYGYTMA (336 aa). Cysteine 876 serves as the catalytic Glycyl thioester intermediate.

As to quaternary structure, homodimer. The homodimer is autoinhibited and stabilized by its N-terminal helix. Interacts with RAB1 (RAB1A, RAB1B or RAB1C), RAB4 (RAB4A or RAB4B) and RAB11 (RAB11A or RAB11B); in a GTP-dependent manner. Interacts with the 26S proteasomal complex through the 20S core proteasomal subunit. Interacts with RARB. In terms of processing, autoubiquitinated.

The protein localises to the golgi apparatus. Its subcellular location is the golgi stack membrane. It localises to the cytoplasm. It is found in the endoplasmic reticulum. The catalysed reaction is S-ubiquitinyl-[E2 ubiquitin-conjugating enzyme]-L-cysteine + [acceptor protein]-L-lysine = [E2 ubiquitin-conjugating enzyme]-L-cysteine + N(6)-ubiquitinyl-[acceptor protein]-L-lysine.. It functions in the pathway protein modification; protein ubiquitination. In terms of biological role, E3 ubiquitin-protein ligase involved in Golgi membrane fusion and regulation of small GTPases. Acts as a regulator of Golgi membrane dynamics during the cell cycle: recruited to Golgi membrane by Rab proteins and regulates postmitotic Golgi membrane fusion. Acts by mediating ubiquitination during mitotic Golgi disassembly, ubiquitination serving as a signal for Golgi reassembly later, after cell division. Specifically binds GTP-bound RAC1, mediating ubiquitination and subsequent degradation of active RAC1, thereby playing a role in host defense against pathogens. May also act as a transcription regulator via its interaction with RARB. This Bos taurus (Bovine) protein is E3 ubiquitin-protein ligase HACE1 (HACE1).